The sequence spans 154 residues: Myoglobin (154 aa).

The Globin domain maps to 2–148 (GLSDGEWHLV…FRNDIAAKIK (147 aa)). The residue at position 4 (S4) is a Phosphoserine. H65 serves as a coordination point for nitrite. H65 contributes to the O2 binding site. T68 bears the Phosphothreonine mark. A heme b-binding site is contributed by H94.

This sequence belongs to the globin family. As to quaternary structure, monomeric.

It is found in the cytoplasm. The protein resides in the sarcoplasm. The catalysed reaction is Fe(III)-heme b-[protein] + nitric oxide + H2O = Fe(II)-heme b-[protein] + nitrite + 2 H(+). The enzyme catalyses H2O2 + AH2 = A + 2 H2O. Monomeric heme protein which primary function is to store oxygen and facilitate its diffusion within muscle tissues. Reversibly binds oxygen through a pentacoordinated heme iron and enables its timely and efficient release as needed during periods of heightened demand. Depending on the oxidative conditions of tissues and cells, and in addition to its ability to bind oxygen, it also has a nitrite reductase activity whereby it regulates the production of bioactive nitric oxide. Under stress conditions, like hypoxia and anoxia, it also protects cells against reactive oxygen species thanks to its pseudoperoxidase activity. This chain is Myoglobin (MB), found in Pusa sibirica (Baikal seal).